The primary structure comprises 149 residues: MDLPACRDIRRTGHWSEADDRVTLSYDDRFLRRKRLITVQDKAFLVDLAHTTSLEHGDAFQLEDGRLIECIAADEDLLEVTGPDLTRLAWHIGNRHTPCQIEENRLLIQRDHVIQDMLSQIGATLREVVEPFTPEGGAYGHGRTHGHAH.

This sequence belongs to the UreE family.

It is found in the cytoplasm. Functionally, involved in urease metallocenter assembly. Binds nickel. Probably functions as a nickel donor during metallocenter assembly. The sequence is that of Urease accessory protein UreE from Ruegeria pomeroyi (strain ATCC 700808 / DSM 15171 / DSS-3) (Silicibacter pomeroyi).